Here is a 251-residue protein sequence, read N- to C-terminus: uncharacterized protein (251 aa).

12–21 (TGASSQGDIG) lines the NADP(+) pocket. Ser-148 lines the substrate pocket. Tyr-161 serves as the catalytic Proton acceptor.

It belongs to the short-chain dehydrogenases/reductases (SDR) family.

This is an uncharacterized protein from Bacillus subtilis (strain 168).